Here is a 452-residue protein sequence, read N- to C-terminus: Bifunctional protein GlmU (452 aa).

Positions 1–232 (MTTNAPGAVI…EADMQGVNSR (232 aa)) are pyrophosphorylase. UDP-N-acetyl-alpha-D-glucosamine-binding positions include 11–14 (LAAG), Lys25, Gln78, and 83–84 (GT). Mg(2+) is bound at residue Asp108. The UDP-N-acetyl-alpha-D-glucosamine site is built by Gly144, Glu158, and Asn230. Position 230 (Asn230) interacts with Mg(2+). The linker stretch occupies residues 233-253 (ADLAAAEATMQQRLRMAAMAG). The N-acetyltransferase stretch occupies residues 254-452 (GVTMLDPSSV…HKDKKKASGE (199 aa)). UDP-N-acetyl-alpha-D-glucosamine contacts are provided by Arg319 and Lys337. The active-site Proton acceptor is His349. Residues Tyr352 and Asn363 each contribute to the UDP-N-acetyl-alpha-D-glucosamine site. Acetyl-CoA is bound by residues Ala366, 372–373 (NY), Ser391, Ser409, and Arg426.

In the N-terminal section; belongs to the N-acetylglucosamine-1-phosphate uridyltransferase family. It in the C-terminal section; belongs to the transferase hexapeptide repeat family. As to quaternary structure, homotrimer. It depends on Mg(2+) as a cofactor.

The protein resides in the cytoplasm. The catalysed reaction is alpha-D-glucosamine 1-phosphate + acetyl-CoA = N-acetyl-alpha-D-glucosamine 1-phosphate + CoA + H(+). It catalyses the reaction N-acetyl-alpha-D-glucosamine 1-phosphate + UTP + H(+) = UDP-N-acetyl-alpha-D-glucosamine + diphosphate. The protein operates within nucleotide-sugar biosynthesis; UDP-N-acetyl-alpha-D-glucosamine biosynthesis; N-acetyl-alpha-D-glucosamine 1-phosphate from alpha-D-glucosamine 6-phosphate (route II): step 2/2. It functions in the pathway nucleotide-sugar biosynthesis; UDP-N-acetyl-alpha-D-glucosamine biosynthesis; UDP-N-acetyl-alpha-D-glucosamine from N-acetyl-alpha-D-glucosamine 1-phosphate: step 1/1. Its pathway is bacterial outer membrane biogenesis; LPS lipid A biosynthesis. Catalyzes the last two sequential reactions in the de novo biosynthetic pathway for UDP-N-acetylglucosamine (UDP-GlcNAc). The C-terminal domain catalyzes the transfer of acetyl group from acetyl coenzyme A to glucosamine-1-phosphate (GlcN-1-P) to produce N-acetylglucosamine-1-phosphate (GlcNAc-1-P), which is converted into UDP-GlcNAc by the transfer of uridine 5-monophosphate (from uridine 5-triphosphate), a reaction catalyzed by the N-terminal domain. The polypeptide is Bifunctional protein GlmU (Parvibaculum lavamentivorans (strain DS-1 / DSM 13023 / NCIMB 13966)).